Reading from the N-terminus, the 87-residue chain is Sec-independent protein translocase protein TatA (87 aa).

The helical transmembrane segment at 1-21 threads the bilayer; sequence MGSFSITHWLILLVVVVVVFG. The segment at 56–87 is disordered; that stretch reads VLDHDAGTNPPNITGTQSDTTSANKVDDTHNV. The span at 64–79 shows a compositional bias: polar residues; the sequence is NPPNITGTQSDTTSAN.

The protein belongs to the TatA/E family. As to quaternary structure, the Tat system comprises two distinct complexes: a TatABC complex, containing multiple copies of TatA, TatB and TatC subunits, and a separate TatA complex, containing only TatA subunits. Substrates initially bind to the TatABC complex, which probably triggers association of the separate TatA complex to form the active translocon.

It is found in the cell inner membrane. In terms of biological role, part of the twin-arginine translocation (Tat) system that transports large folded proteins containing a characteristic twin-arginine motif in their signal peptide across membranes. TatA could form the protein-conducting channel of the Tat system. The polypeptide is Sec-independent protein translocase protein TatA (Psychrobacter arcticus (strain DSM 17307 / VKM B-2377 / 273-4)).